Here is a 450-residue protein sequence, read N- to C-terminus: uncharacterized protein (450 aa).

Residues 1-58 enclose the TRAM domain; it reads MQKNQIVDLEITDLSYEAMGVAHLDGMTVFVNNALPGEIVSAKLLKVKKNFAFAKIEK. 4 residues coordinate S-adenosyl-L-methionine: Q280, Y309, E330, and D378. The active-site Nucleophile is the C405.

This sequence belongs to the class I-like SAM-binding methyltransferase superfamily. RNA M5U methyltransferase family.

This is an uncharacterized protein from Lactobacillus johnsonii (strain CNCM I-12250 / La1 / NCC 533).